Consider the following 644-residue polypeptide: Threonine--tRNA ligase (644 aa).

Positions 1 to 61 constitute a TGS domain; the sequence is MVAITLPDGS…VADAKVEIVT (61 aa). The interval 242 to 533 is catalytic; sequence DHRKIGKALN…LIENYAGWMP (292 aa). 3 residues coordinate Zn(2+): cysteine 333, histidine 384, and histidine 510.

The protein belongs to the class-II aminoacyl-tRNA synthetase family. Homodimer. Zn(2+) serves as cofactor.

The protein resides in the cytoplasm. The catalysed reaction is tRNA(Thr) + L-threonine + ATP = L-threonyl-tRNA(Thr) + AMP + diphosphate + H(+). Catalyzes the attachment of threonine to tRNA(Thr) in a two-step reaction: L-threonine is first activated by ATP to form Thr-AMP and then transferred to the acceptor end of tRNA(Thr). Also edits incorrectly charged L-seryl-tRNA(Thr). This Psychrobacter arcticus (strain DSM 17307 / VKM B-2377 / 273-4) protein is Threonine--tRNA ligase.